Reading from the N-terminus, the 410-residue chain is Ribulose bisphosphate carboxylase large chain (410 aa).

2 residues coordinate substrate: Asn100 and Thr150. Lys152 serves as the catalytic Proton acceptor. Position 154 (Lys154) interacts with substrate. Mg(2+)-binding residues include Lys178, Asp180, and Glu181. Lys178 is subject to N6-carboxylysine. His271 acts as the Proton acceptor in catalysis. Residues Arg272, His304, and Ser356 each coordinate substrate.

This sequence belongs to the RuBisCO large chain family. Type I subfamily. Heterohexadecamer of 8 large chains and 8 small chains; disulfide-linked. The disulfide link is formed within the large subunit homodimers. Requires Mg(2+) as cofactor. Post-translationally, the disulfide bond which can form in the large chain dimeric partners within the hexadecamer appears to be associated with oxidative stress and protein turnover.

The protein resides in the plastid. It is found in the chloroplast. It catalyses the reaction 2 (2R)-3-phosphoglycerate + 2 H(+) = D-ribulose 1,5-bisphosphate + CO2 + H2O. The catalysed reaction is D-ribulose 1,5-bisphosphate + O2 = 2-phosphoglycolate + (2R)-3-phosphoglycerate + 2 H(+). In terms of biological role, ruBisCO catalyzes two reactions: the carboxylation of D-ribulose 1,5-bisphosphate, the primary event in carbon dioxide fixation, as well as the oxidative fragmentation of the pentose substrate in the photorespiration process. Both reactions occur simultaneously and in competition at the same active site. This chain is Ribulose bisphosphate carboxylase large chain (rbcL), found in Gleichenia japonica (Urajiro).